The primary structure comprises 193 residues: Penicillin-binding protein activator LpoB (193 aa).

The first 16 residues, 1 to 16 (MKKMLFVVAAVFLLAG), serve as a signal peptide directing secretion. The N-palmitoyl cysteine moiety is linked to residue cysteine 17. Cysteine 17 carries S-diacylglycerol cysteine lipidation. The segment at 23-50 (QQPPAPVEPVTPTEPTEPPKPIEPPIEV) is disordered. Positions 37-46 (PTEPPKPIEP) are enriched in pro residues.

The protein belongs to the LpoB family. As to quaternary structure, interacts with PBP1b.

Its subcellular location is the cell outer membrane. Functionally, regulator of peptidoglycan synthesis that is essential for the function of penicillin-binding protein 1B (PBP1b). This Proteus mirabilis (strain HI4320) protein is Penicillin-binding protein activator LpoB.